A 78-amino-acid chain; its full sequence is Mambalgin-1 (78 aa).

Residues 1-21 (MKTLLLTLLVVTIVCLDLGYS) form the signal peptide. 4 disulfides stabilise this stretch: C24-C40, C33-C58, C62-C70, and C71-C76.

The protein belongs to the three-finger toxin family. Short-chain subfamily. Mambalgin sub-subfamily. In terms of tissue distribution, expressed by the venom gland.

It localises to the secreted. Its function is as follows. This three-finger toxin inhibits ASIC channels. It acts as a gating modifier toxin by decreasing the apparent proton sensitivity of activation and by slightly increasing the apparent proton sensitivity for inactivation. It binds more tightly to the closed state and to a much lesser extent the inactivated/desensitized state of ASIC1a isoform of ASIC1. It interacts directly with the outside surface of the thumb domain of chicken ASIC1a (ASIC1a), but does not insert into the acidic pocket as suggested for mambalgin-2. This binding leads to relocation of the thumb domain that could disrupt the acidic pocket of cASIC1a. It reversibly inhibits rat ASIC1a (IC(50)=3.4-55 nM), rat ASIC1a-ASIC2b (IC(50)=61 nM), rat ASIC1a-ASIC1b (IC(50)=72 nM), human ASIC1a (IC(50)=127-580 nM), chicken ASIC1a (IC(50)=123.6 nM), rat ASIC1b (IC(50)=22.2-203 nM), rat ASIC1a-ASIC2a (IC(50)=152-252 nM). In vivo, it shows a potent naloxone-resistant analgesic effect against acute and inflammatory pain upon central and peripheral injection. In addition, it also has an opioid-independent effect on both thermal and mechanical inflammatory pain after systemic administration and is effective against neuropathic pain. The chain is Mambalgin-1 from Dendroaspis polylepis polylepis (Black mamba).